The primary structure comprises 313 residues: ADP-L-glycero-D-manno-heptose-6-epimerase (313 aa).

NADP(+) is bound by residues 10-11 (MI), 31-32 (DN), lysine 38, lysine 53, 75-79 (EGACS), and asparagine 92. The Proton acceptor role is filled by tyrosine 139. Lysine 143 provides a ligand contact to NADP(+). Asparagine 174 lines the substrate pocket. NADP(+) contacts are provided by valine 175 and lysine 183. The Proton acceptor role is filled by lysine 183. Residues serine 185, histidine 192, 206–209 (FEGS), arginine 214, and tyrosine 277 contribute to the substrate site.

It belongs to the NAD(P)-dependent epimerase/dehydratase family. HldD subfamily. Homopentamer. It depends on NADP(+) as a cofactor.

The enzyme catalyses ADP-D-glycero-beta-D-manno-heptose = ADP-L-glycero-beta-D-manno-heptose. It participates in nucleotide-sugar biosynthesis; ADP-L-glycero-beta-D-manno-heptose biosynthesis; ADP-L-glycero-beta-D-manno-heptose from D-glycero-beta-D-manno-heptose 7-phosphate: step 4/4. Its function is as follows. Catalyzes the interconversion between ADP-D-glycero-beta-D-manno-heptose and ADP-L-glycero-beta-D-manno-heptose via an epimerization at carbon 6 of the heptose. This is ADP-L-glycero-D-manno-heptose-6-epimerase from Aliivibrio fischeri (strain ATCC 700601 / ES114) (Vibrio fischeri).